Consider the following 166-residue polypeptide: Small ribosomal subunit protein uS5 (166 aa).

The S5 DRBM domain maps to 11–74 (LEDRVVSINR…EDAKKNLINV (64 aa)).

Belongs to the universal ribosomal protein uS5 family. Part of the 30S ribosomal subunit. Contacts proteins S4 and S8.

Functionally, with S4 and S12 plays an important role in translational accuracy. In terms of biological role, located at the back of the 30S subunit body where it stabilizes the conformation of the head with respect to the body. This Latilactobacillus sakei subsp. sakei (strain 23K) (Lactobacillus sakei subsp. sakei) protein is Small ribosomal subunit protein uS5.